Consider the following 183-residue polypeptide: MSQARFIAFSDGSALVNPGGPGGTGFVVLDRARPAYRFGGTRWVEDGPNAVTNNRMELRAVLEALEGLPGGEQVEVISDSRYVVDALSRWIHGWRKKGWRTASGEPVLNRDLIEALDARASALSVRYTWVRGHDGHAVNEVVDQLAQAAARGVAGPGEAEVVAALRAEAFLAGGPAAPRSSRA.

The region spanning 2–151 (SQARFIAFSD…VDQLAQAAAR (150 aa)) is the RNase H type-1 domain. Mg(2+) is bound by residues D11, E57, D79, and D143.

The protein belongs to the RNase H family. Monomer. Requires Mg(2+) as cofactor.

Its subcellular location is the cytoplasm. The catalysed reaction is Endonucleolytic cleavage to 5'-phosphomonoester.. Endonuclease that specifically degrades the RNA of RNA-DNA hybrids. The chain is Ribonuclease H from Anaeromyxobacter sp. (strain K).